Consider the following 603-residue polypeptide: MHYKKYAELLKNGTYFSHIHSPTLLYPKGKVMYAQYGNSPLQGLNSQVTNLNLIRKVVAASAEMDSFKKLPNLQNNKLPLNNLKARLNTKAIYISNEEAQLTVSKIGTPNAIETDVPGTIKNAPSNTLLTHRSFKFFVNKIYAKPLISLKKTKETKPLLLGKTGTTLTQKGLNPFQSLFLNTKSSSPSTARSFGTKNIVNTLQIKKIVHKFENSYSKLTEINLITINLASANRIRQWAEKTLPNGKVVGEVINPETIHYKTLKPIKGGLFCERIFGPLKDHECACGKKFNIKNYLTKTVNNSSIQPIAESRQTQPNTQLSLNLQKRYFCRICDVEYTYSIIRRTQLGYIQLASPTTHVWFVKGIPSYISILLDMKKKHLQGITYNTETLTLENSFRGRQLLPVSPSSIFESWQKIMKKQYPEKYNLTNTMIKIKSTNTLPLRVSQPNSNTSYSYMPNIYIPEGEGEEKTKTKLKKTTPLNAIAQKGVKYKKPKTKKALYKQYLKNYYARKPKNSNQAEAVSFGVNKVQLPLTAFQQRNKVYFYKSEKRNWPVLTTVAKMQYIVSKKGWFKLIQYVIKSAESYGAATPTKMDGLQKMSLLTKQA.

The Zn(2+) site is built by Cys283, Cys285, Cys329, and Cys332.

Belongs to the RNA polymerase beta' chain family. RpoC1 subfamily. In terms of assembly, in plastids the minimal PEP RNA polymerase catalytic core is composed of four subunits: alpha, beta, beta', and beta''. When a (nuclear-encoded) sigma factor is associated with the core the holoenzyme is formed, which can initiate transcription. It depends on Zn(2+) as a cofactor.

Its subcellular location is the plastid. It localises to the chloroplast. The enzyme catalyses RNA(n) + a ribonucleoside 5'-triphosphate = RNA(n+1) + diphosphate. Its function is as follows. DNA-dependent RNA polymerase catalyzes the transcription of DNA into RNA using the four ribonucleoside triphosphates as substrates. The polypeptide is DNA-directed RNA polymerase subunit beta' N-terminal section (rpoC1A) (Chlamydomonas reinhardtii (Chlamydomonas smithii)).